The following is a 635-amino-acid chain: Biosynthetic arginine decarboxylase (635 aa).

N6-(pyridoxal phosphate)lysine is present on Lys-101. A substrate-binding site is contributed by 284-294 (VDVGGGLGVDY).

It belongs to the Orn/Lys/Arg decarboxylase class-II family. SpeA subfamily. Mg(2+) is required as a cofactor. Requires pyridoxal 5'-phosphate as cofactor.

The enzyme catalyses L-arginine + H(+) = agmatine + CO2. It participates in amine and polyamine biosynthesis; agmatine biosynthesis; agmatine from L-arginine: step 1/1. Functionally, catalyzes the biosynthesis of agmatine from arginine. The chain is Biosynthetic arginine decarboxylase from Tolumonas auensis (strain DSM 9187 / NBRC 110442 / TA 4).